The sequence spans 256 residues: Thiazole synthase (256 aa).

The Schiff-base intermediate with DXP role is filled by K96. Residues G157, 183-184 (AG), and 205-206 (NT) each bind 1-deoxy-D-xylulose 5-phosphate.

Belongs to the ThiG family. Homotetramer. Forms heterodimers with either ThiH or ThiS.

The protein localises to the cytoplasm. It carries out the reaction [ThiS sulfur-carrier protein]-C-terminal-Gly-aminoethanethioate + 2-iminoacetate + 1-deoxy-D-xylulose 5-phosphate = [ThiS sulfur-carrier protein]-C-terminal Gly-Gly + 2-[(2R,5Z)-2-carboxy-4-methylthiazol-5(2H)-ylidene]ethyl phosphate + 2 H2O + H(+). It functions in the pathway cofactor biosynthesis; thiamine diphosphate biosynthesis. Catalyzes the rearrangement of 1-deoxy-D-xylulose 5-phosphate (DXP) to produce the thiazole phosphate moiety of thiamine. Sulfur is provided by the thiocarboxylate moiety of the carrier protein ThiS. In vitro, sulfur can be provided by H(2)S. The polypeptide is Thiazole synthase (Bacillus cytotoxicus (strain DSM 22905 / CIP 110041 / 391-98 / NVH 391-98)).